A 312-amino-acid polypeptide reads, in one-letter code: Ribosomal protein L11 methyltransferase (312 aa).

Residues Thr160, Gly181, Asp203, and Asn246 each contribute to the S-adenosyl-L-methionine site.

This sequence belongs to the methyltransferase superfamily. PrmA family.

The protein localises to the cytoplasm. It carries out the reaction L-lysyl-[protein] + 3 S-adenosyl-L-methionine = N(6),N(6),N(6)-trimethyl-L-lysyl-[protein] + 3 S-adenosyl-L-homocysteine + 3 H(+). In terms of biological role, methylates ribosomal protein L11. The protein is Ribosomal protein L11 methyltransferase of Staphylococcus aureus (strain bovine RF122 / ET3-1).